The primary structure comprises 115 residues: Cell division protein FtsL (115 aa).

The Cytoplasmic portion of the chain corresponds to 1–25 (MNTATRVIVAQNVRTRNRTFQITKQ). A helical membrane pass occupies residues 26 to 46 (GVVIVALVIALLCSAFGVVYF). At 47-115 (KDLNRRLFIQ…ILVNADAMIE (69 aa)) the chain is on the periplasmic side.

The protein belongs to the FtsL family. In terms of assembly, part of a complex composed of FtsB, FtsL and FtsQ.

The protein resides in the cell inner membrane. Its function is as follows. Essential cell division protein. May link together the upstream cell division proteins, which are predominantly cytoplasmic, with the downstream cell division proteins, which are predominantly periplasmic. The chain is Cell division protein FtsL from Coxiella burnetii (strain RSA 493 / Nine Mile phase I).